A 537-amino-acid polypeptide reads, in one-letter code: MAAQCVTKVALNVSCANLLDKDIGSKSDPLCVLFLNTSGQQWYEVERTERIKNCLNPQFSKTFIIDYYFEVVQKLKFGVYDIDNKTIELSDDDFLGECECTLGQIVSSKKLTRPLVMKTGRPAGKGSITISAEEIKDNRVVLFEMEARKLDNKDLFGKSDPYLEFHKQTSDGNWLMVHRTEVVKNNLNPVWRPFKISLNSLCYGDMDKTIKVECYDYDNDGSHDLIGTFQTTMTKLKEASRSSPVEFECINEKKRQKKKSYKNSGVISVKQCEITVECTFLDYIMGGCQLNFTVGVDFTGSNGDPRSPDSLHYISPNGVNEYLTALWSVGLVIQDYDADKMFPAFGFGAQIPPQWQVSHEFPMNFNPSNPYCNGIQGIVEAYRSCLPQIKLYGPTNFSPIINHVARFAAAATQQQTASQYFVLLIITDGVITDLDETRQAIVNASRLPMSIIIVGVGGADFSAMEFLDGDGGSLRSPLGEVAIRDIVQFVPFRQFQNAPKEALAQCVLAEIPQQVVGYFNTYKLLPPKNPATKQQKQ.

2 consecutive C2 domains span residues 1–115 (MAAQ…TRPL) and 124–247 (GKGS…PVEF). Ser14 is subject to Phosphoserine. Residues Asp22, Asp28, Asp81, Asp83, Asp93, Asp154, and Asp160 each contribute to the Ca(2+) site. Ser197 carries the post-translational modification Phosphoserine. Ca(2+)-binding residues include Asp216, Asp218, and Asp224. A Phosphoserine modification is found at Ser243. Residues 291–513 (NFTVGVDFTG…AQCVLAEIPQ (223 aa)) enclose the VWFA domain.

This sequence belongs to the copine family. As to quaternary structure, monomer. Interacts with ERBB2 (preferentially with the tyrosine phosphorylated form); this interaction occurs at the cell membrane and is increased in a growth factor heregulin-dependent manner. Interacts with SHC1; this interaction may mediate the binding of CPNE3 with ERBB2. Interacts with RACK1. Ca(2+) serves as cofactor. Phosphorylated on serine and threonine residues. In terms of tissue distribution, expressed in breast and weakly in prostate and ovarian tissues. Expressed in neutrophils (at protein level). Widely expressed. Expressed in the brain. Expressed in neutrophil precursors from the bone marrow and peripheral blood. Expressed in primary breast tumors and ovarian endometrioid adenocarcinoma.

It is found in the nucleus. It localises to the cytoplasm. The protein localises to the cell membrane. The protein resides in the cell junction. Its subcellular location is the focal adhesion. In terms of biological role, calcium-dependent phospholipid-binding protein that plays a role in ERBB2-mediated tumor cell migration in response to growth factor heregulin stimulation. This chain is Copine-3, found in Homo sapiens (Human).